Here is a 321-residue protein sequence, read N- to C-terminus: MADSLAGIDQVTSLHKNNELQLLCFRLGKNKDLYAVNVFKIREVVKYHGNLTIISHENNSLVEGLIIIRELTIPLIDMKKWFYYDSQNKNKDLRPYRIEKEKGEDDIVMICEFSRWTIGVRIYEADRILSKKWTEMEQSAGLGGSAGNNKLVSRTRYFDGRLVQVVDIEKMLIDVFPWIEDEKHNDLETLSKIHSNQCVLLADDSPSVLKTMQMILDKLGVKHIDFINGKTLLEHLFNPTTDVSNIGLIITDLEMPEASGFEVIKQVKNNPLTSKIPIVVNSSMSGSSNEDMARSLKADDFISKSNPKDIQRVVKQFLELA.

The 159-residue stretch at 19–177 (ELQLLCFRLG…IEKMLIDVFP (159 aa)) folds into the CheW-like domain. In terms of domain architecture, Response regulatory spans 198–319 (CVLLADDSPS…IQRVVKQFLE (122 aa)). Aspartate 252 bears the 4-aspartylphosphate mark.

Functionally, plays an essential role in chemotaxis signal transduction system in order to colonize the host stomach. May act as a phosphate sink to control the flow of phosphate to CheAY. The polypeptide is Chemotaxis protein CheV1 (Helicobacter pylori (strain ATCC 700392 / 26695) (Campylobacter pylori)).